The following is a 444-amino-acid chain: Elongation factor 1-alpha (444 aa).

In terms of domain architecture, tr-type G spans 15–236 (KPHINLAVVG…VLDTFQPPPR (222 aa)). Positions 24–31 (GHVDNGKS) are G1. 24 to 31 (GHVDNGKS) is a GTP binding site. Residue S31 participates in Mg(2+) binding. The tract at residues 80-84 (GVTIE) is G2. The tract at residues 101-104 (DLPG) is G3. Residues 101–105 (DLPGH) and 163–166 (NKMD) each bind GTP. The interval 163 to 166 (NKMD) is G4. The segment at 202-204 (SAI) is G5.

This sequence belongs to the TRAFAC class translation factor GTPase superfamily. Classic translation factor GTPase family. EF-Tu/EF-1A subfamily.

The protein resides in the cytoplasm. It carries out the reaction GTP + H2O = GDP + phosphate + H(+). In terms of biological role, GTP hydrolase that promotes the GTP-dependent binding of aminoacyl-tRNA to the A-site of ribosomes during protein biosynthesis. The chain is Elongation factor 1-alpha from Pyrobaculum calidifontis (strain DSM 21063 / JCM 11548 / VA1).